A 281-amino-acid polypeptide reads, in one-letter code: Probable endonuclease 4 (281 aa).

Residues His-69, His-109, Glu-145, Asp-179, His-182, His-216, Asp-229, His-231, and Glu-261 each coordinate Zn(2+).

This sequence belongs to the AP endonuclease 2 family. Requires Zn(2+) as cofactor.

The catalysed reaction is Endonucleolytic cleavage to 5'-phosphooligonucleotide end-products.. Endonuclease IV plays a role in DNA repair. It cleaves phosphodiester bonds at apurinic or apyrimidinic (AP) sites, generating a 3'-hydroxyl group and a 5'-terminal sugar phosphate. This chain is Probable endonuclease 4, found in Chlorobaculum tepidum (strain ATCC 49652 / DSM 12025 / NBRC 103806 / TLS) (Chlorobium tepidum).